We begin with the raw amino-acid sequence, 823 residues long: MRKRTLVSVLFLFSLLFLLPDQGRKLHANAEESSDDVTDPPKVEEKIGGHGGLSTDSDVVHRESESMSKKTLRSNAEKFEFQAEVSRLMDIIINSLYSNKDIFLRELISNASDALDKIRFLALTDKDVLGEGDTAKLEIQIKLDKAKKILSIRDRGIGMTKEDLIKNLGTIAKSGTSAFVEKMQSSGDLNLIGQFGVGFYSAYLVADYIEVISKHNDDSQYVWESKANGKFAVSEDTWNEPLGRGTEIRLHLRDEAGEYLEESKLKELVKRYSEFINFPISLWASKEVETEVPVEEDESADEETETTSTEEEKEEDAEEEDGEKKQKTKKVKETVYEWELLNDVKAIWLRSPKEVTEEEYTKFYHSLSKDFTDEKPMAWSHFNAEGDVEFKAVLYVPPKAPHDLYESYYNSNKANLKLYVRRVFISDEFDELLPKYLSFLKGLVDSDTLPLNVSREMLQQHSSLKTIKKKLIRKALDMIRKLAEEDPDEIHDDEKKDVEKSGENDEKKGQYTKFWNEFGKSVKLGIIEDAANRNRLAKLLRFETTKSDGKLTSLDQYIKRMKKSQKDIFYITGSSKEQLEKSPFLERLIKKGYEVIFFTDPVDEYLMQYLMDYEDKKFQNVSKEGLKVGKDSKDKELKEAFKELTKWWKGNLASENVDDVKISNRLADTPCVVVTSKFGWSANMERIMQSQTLSDANKQAYMRGKRVLEINPRHPIIKELKDRIASDPEDESVKETAQLMYQTALIESGFILTDPKDFAARIYNSVKSGLNISPDAVADEEIEAAEEPETSEATETKSDDLAGGLNIEAEPVEQQEENTKDEL.

An N-terminal signal peptide occupies residues 1-23 (MRKRTLVSVLFLFSLLFLLPDQG). Positions 29–60 (NAEESSDDVTDPPKVEEKIGGHGGLSTDSDVV) are disordered. The segment covering 39 to 48 (DPPKVEEKIG) has biased composition (basic and acidic residues). ATP-binding positions include glutamate 106, asparagine 110, aspartate 154, methionine 159, asparagine 167, lysine 173, 174–175 (SG), 194–199 (QFGVGF), phenylalanine 199, and threonine 246. Asparagine 110 carries an N-linked (GlcNAc...) asparagine glycan. Residues 289 to 328 (ETEVPVEEDESADEETETTSTEEEKEEDAEEEDGEKKQKT) are disordered. Over residues 290–321 (TEVPVEEDESADEETETTSTEEEKEEDAEEED) the composition is skewed to acidic residues. N-linked (GlcNAc...) asparagine glycans are attached at residues asparagine 452 and asparagine 620. Positions 777–792 (VADEEIEAAEEPETSE) are enriched in acidic residues. Residues 777–823 (VADEEIEAAEEPETSEATETKSDDLAGGLNIEAEPVEQQEENTKDEL) form a disordered region. Residues 820-823 (KDEL) carry the Prevents secretion from ER motif.

Belongs to the heat shock protein 90 family. As to quaternary structure, interacts with FKBP42. Interacts with P23-1. In terms of tissue distribution, ubiquitous.

The protein localises to the endoplasmic reticulum lumen. May have a molecular chaperone role in the processing of secreted materials. Required for shoot apical meristem (SAM), root apical meristem (RAM) and floral meristem (FM) formation, probably by regulating the folding of CLAVATA proteins (CLVs). Also involved in pollen tube elongation. Involved in resistance to tunicamycin- or high calcium-induced ER stresses. Possesses ATPase activity. The protein is Endoplasmin homolog of Arabidopsis thaliana (Mouse-ear cress).